The following is a 96-amino-acid chain: MNTTDDVSCAEIYVSGRVQGVYFRGFTQKTATSLGLMGYAQNLPDGRVKVVAQGKRSCISELLDHLHIGPELSNVECIEVGWMGLSDTFTDFFIKR.

The Acylphosphatase-like domain maps to C9–R96. Catalysis depends on residues R24 and N42.

It belongs to the acylphosphatase family.

It carries out the reaction an acyl phosphate + H2O = a carboxylate + phosphate + H(+). The sequence is that of Acylphosphatase (acyP) from Methanococcoides burtonii (strain DSM 6242 / NBRC 107633 / OCM 468 / ACE-M).